A 64-amino-acid polypeptide reads, in one-letter code: Disintegrin VLO5A (64 aa).

A Disintegrin domain is found at 1 to 64 (NSGNPCCDPV…SDCPRNPYKD (64 aa)). 4 disulfides stabilise this stretch: Cys6/Cys29, Cys20/Cys26, Cys25/Cys50, and Cys38/Cys57. A Cell attachment site; atypical (VGD) motif is present at residues 42–44 (VGD).

It belongs to the venom metalloproteinase (M12B) family. P-II subfamily. P-IIe sub-subfamily. In terms of assembly, heterodimer with VLO5B; disulfide-linked. Expressed by the venom gland.

The protein resides in the secreted. In terms of biological role, poor inhibitor of platelet aggregation. The disintegrin inhibits the adhesion of the alpha-4/beta-1 (ITGA4/ITGB1) integrin to VCAM-1. Inhibition on alpha-IIb/beta-3 (ITGA2B/ITGB3) is low. This Macrovipera lebetina obtusa (Levant blunt-nosed viper) protein is Disintegrin VLO5A.